A 544-amino-acid polypeptide reads, in one-letter code: Chaperonin GroEL (544 aa).

Residues 29-32, 86-90, G413, 476-478, and D492 each bind ATP; these read TLGP, DGTTT, and NAA.

It belongs to the chaperonin (HSP60) family. As to quaternary structure, forms a cylinder of 14 subunits composed of two heptameric rings stacked back-to-back. Interacts with the co-chaperonin GroES.

The protein localises to the cytoplasm. The enzyme catalyses ATP + H2O + a folded polypeptide = ADP + phosphate + an unfolded polypeptide.. Its function is as follows. Together with its co-chaperonin GroES, plays an essential role in assisting protein folding. The GroEL-GroES system forms a nano-cage that allows encapsulation of the non-native substrate proteins and provides a physical environment optimized to promote and accelerate protein folding. This is Chaperonin GroEL from Bacillus thuringiensis (strain Al Hakam).